Consider the following 146-residue polypeptide: Large ribosomal subunit protein uL16 (146 aa).

It belongs to the universal ribosomal protein uL16 family. In terms of assembly, part of the 50S ribosomal subunit.

Binds 23S rRNA and is also seen to make contacts with the A and possibly P site tRNAs. This Thermomicrobium roseum (strain ATCC 27502 / DSM 5159 / P-2) protein is Large ribosomal subunit protein uL16.